The chain runs to 211 residues: Thymidylate kinase (211 aa).

10–17 is an ATP binding site; the sequence is GVEGCGKT.

It belongs to the thymidylate kinase family.

It catalyses the reaction dTMP + ATP = dTDP + ADP. Functionally, phosphorylation of dTMP to form dTDP in both de novo and salvage pathways of dTTP synthesis. The chain is Thymidylate kinase from Nostoc punctiforme (strain ATCC 29133 / PCC 73102).